Consider the following 126-residue polypeptide: Large ribosomal subunit protein uL22 (126 aa).

This sequence belongs to the universal ribosomal protein uL22 family. Part of the 50S ribosomal subunit.

In terms of biological role, this protein binds specifically to 23S rRNA; its binding is stimulated by other ribosomal proteins, e.g. L4, L17, and L20. It is important during the early stages of 50S assembly. It makes multiple contacts with different domains of the 23S rRNA in the assembled 50S subunit and ribosome. Functionally, the globular domain of the protein is located near the polypeptide exit tunnel on the outside of the subunit, while an extended beta-hairpin is found that lines the wall of the exit tunnel in the center of the 70S ribosome. The chain is Large ribosomal subunit protein uL22 from Rhodospirillum rubrum (strain ATCC 11170 / ATH 1.1.1 / DSM 467 / LMG 4362 / NCIMB 8255 / S1).